A 205-amino-acid chain; its full sequence is MATYAAFKHVELYNVGKAKKRVLRAPGGVSSDIFGADMPQTPRNVKNLMASNIFSAEKDVAQKNNVRQGAHRFYFMGDVPRRGQKPVDSYSRLFGEPTRPFTPGKNHMKSNILNVGQNSNTAQLISNSKGNYNGKSGSVSSASSSVSSSTENLKINGGIRSEGNPVTGEGYKPGATDYIQPANNGSSQVINKNRVPPGGYSSGLW.

Residue S30 is modified to Phosphoserine. A phosphothreonine mark is found at T41, T98, and T102. The segment covering 124-135 (LISNSKGNYNGK) has biased composition (polar residues). The tract at residues 124–205 (LISNSKGNYN…PPGGYSSGLW (82 aa)) is disordered. Positions 136–149 (SGSVSSASSSVSSS) are enriched in low complexity. A phosphoserine mark is found at S138 and S149. Polar residues predominate over residues 181 to 191 (PANNGSSQVIN).

Belongs to the MAP Jupiter family.

It localises to the nucleus. It is found in the cytoplasm. The protein resides in the cytoskeleton. The protein localises to the spindle. Functionally, binds to all microtubule populations. The protein is Microtubule-associated protein Jupiter of Drosophila virilis (Fruit fly).